Here is a 367-residue protein sequence, read N- to C-terminus: 2-aminoethylphosphonate--pyruvate transaminase (367 aa).

Lys-194 carries the N6-(pyridoxal phosphate)lysine modification.

It belongs to the class-V pyridoxal-phosphate-dependent aminotransferase family. PhnW subfamily. Homodimer. Pyridoxal 5'-phosphate serves as cofactor.

It carries out the reaction (2-aminoethyl)phosphonate + pyruvate = phosphonoacetaldehyde + L-alanine. Functionally, involved in phosphonate degradation. The sequence is that of 2-aminoethylphosphonate--pyruvate transaminase from Salmonella paratyphi B (strain ATCC BAA-1250 / SPB7).